The primary structure comprises 844 residues: Janus kinase and microtubule-interacting protein 3 (844 aa).

Positions 8 to 259 form a coiled coil; the sequence is SRAKGDKAET…LSQAKEAERH (252 aa). Residues 249–290 form a disordered region; sequence QLSQAKEAERHPGSPRRELPYASGAGDASDHSGSPEQQLDEK. Positions 254-267 are enriched in basic and acidic residues; the sequence is KEAERHPGSPRREL. Over residues 270–282 the composition is skewed to low complexity; that stretch reads ASGAGDASDHSGS. The stretch at 289 to 421 forms a coiled coil; that stretch reads EKDARRFQLK…DELSKTLETA (133 aa). Serine 384 is modified (phosphoserine). The segment covering 466-483 has biased composition (polar residues); that stretch reads SDGSSISYQTDRTDQTPC. Positions 466–488 are disordered; that stretch reads SDGSSISYQTDRTDQTPCTPEDD. 2 coiled-coil regions span residues 493 to 621 and 688 to 833; these read MAKE…RERK and EKWL…LFLF.

It belongs to the JAKMIP family.

It localises to the golgi apparatus. The sequence is that of Janus kinase and microtubule-interacting protein 3 (Jakmip3) from Mus musculus (Mouse).